Here is a 542-residue protein sequence, read N- to C-terminus: Chaperonin GroEL (542 aa).

ATP is bound by residues 29-32, 86-90, G413, and D492; these read TLGP and DGTTT.

The protein belongs to the chaperonin (HSP60) family. Forms a cylinder of 14 subunits composed of two heptameric rings stacked back-to-back. Interacts with the co-chaperonin GroES.

It is found in the cytoplasm. It carries out the reaction ATP + H2O + a folded polypeptide = ADP + phosphate + an unfolded polypeptide.. Its function is as follows. Together with its co-chaperonin GroES, plays an essential role in assisting protein folding. The GroEL-GroES system forms a nano-cage that allows encapsulation of the non-native substrate proteins and provides a physical environment optimized to promote and accelerate protein folding. This chain is Chaperonin GroEL, found in Nocardia asteroides.